Reading from the N-terminus, the 332-residue chain is Glycerol-3-phosphate dehydrogenase [NAD(P)+] (332 aa).

NADPH is bound by residues Ser10, Trp11, Lys31, and Lys105. The sn-glycerol 3-phosphate site is built by Lys105, Gly136, and Ser138. An NADPH-binding site is contributed by Ala140. Lys191, Asp244, Ser254, Arg255, and Asn256 together coordinate sn-glycerol 3-phosphate. Lys191 functions as the Proton acceptor in the catalytic mechanism. Arg255 provides a ligand contact to NADPH. Residues Val279 and Glu281 each contribute to the NADPH site.

The protein belongs to the NAD-dependent glycerol-3-phosphate dehydrogenase family.

The protein resides in the cytoplasm. It catalyses the reaction sn-glycerol 3-phosphate + NAD(+) = dihydroxyacetone phosphate + NADH + H(+). The catalysed reaction is sn-glycerol 3-phosphate + NADP(+) = dihydroxyacetone phosphate + NADPH + H(+). Its pathway is membrane lipid metabolism; glycerophospholipid metabolism. In terms of biological role, catalyzes the reduction of the glycolytic intermediate dihydroxyacetone phosphate (DHAP) to sn-glycerol 3-phosphate (G3P), the key precursor for phospholipid synthesis. The sequence is that of Glycerol-3-phosphate dehydrogenase [NAD(P)+] from Anaeromyxobacter sp. (strain K).